The sequence spans 205 residues: ATP phosphoribosyltransferase (205 aa).

It belongs to the ATP phosphoribosyltransferase family. Short subfamily. As to quaternary structure, heteromultimer composed of HisG and HisZ subunits.

The protein localises to the cytoplasm. The catalysed reaction is 1-(5-phospho-beta-D-ribosyl)-ATP + diphosphate = 5-phospho-alpha-D-ribose 1-diphosphate + ATP. The protein operates within amino-acid biosynthesis; L-histidine biosynthesis; L-histidine from 5-phospho-alpha-D-ribose 1-diphosphate: step 1/9. Catalyzes the condensation of ATP and 5-phosphoribose 1-diphosphate to form N'-(5'-phosphoribosyl)-ATP (PR-ATP). Has a crucial role in the pathway because the rate of histidine biosynthesis seems to be controlled primarily by regulation of HisG enzymatic activity. The polypeptide is ATP phosphoribosyltransferase (Leptospira borgpetersenii serovar Hardjo-bovis (strain JB197)).